The following is a 91-amino-acid chain: DNA-binding protein HU (91 aa).

The protein belongs to the bacterial histone-like protein family.

Functionally, histone-like DNA-binding protein which is capable of wrapping DNA to stabilize it, and thus to prevent its denaturation under extreme environmental conditions. Also seems to act as a fortuitous virulence factor in delayed sequelae by binding to heparan sulfate-proteoglycans in the extracellular matrix of target organs and acting as a nidus for in situ immune complex formation. The polypeptide is DNA-binding protein HU (hup) (Streptococcus pyogenes serotype M1).